A 226-amino-acid polypeptide reads, in one-letter code: Cytidylate kinase (226 aa).

11–19 (GPASAGKST) is a binding site for ATP.

It belongs to the cytidylate kinase family. Type 1 subfamily.

It is found in the cytoplasm. The catalysed reaction is CMP + ATP = CDP + ADP. It catalyses the reaction dCMP + ATP = dCDP + ADP. This Pediococcus pentosaceus (strain ATCC 25745 / CCUG 21536 / LMG 10740 / 183-1w) protein is Cytidylate kinase.